The sequence spans 107 residues: Putative nucleosome assembly protein 1-like 6 (107 aa).

The protein belongs to the nucleosome assembly protein (NAP) family.

In Homo sapiens (Human), this protein is Putative nucleosome assembly protein 1-like 6.